Consider the following 123-residue polypeptide: Large ribosomal subunit protein uL18 (123 aa).

Belongs to the universal ribosomal protein uL18 family. As to quaternary structure, part of the 50S ribosomal subunit; part of the 5S rRNA/L5/L18/L25 subcomplex. Contacts the 5S and 23S rRNAs.

Its function is as follows. This is one of the proteins that bind and probably mediate the attachment of the 5S RNA into the large ribosomal subunit, where it forms part of the central protuberance. The sequence is that of Large ribosomal subunit protein uL18 from Chlamydia pneumoniae (Chlamydophila pneumoniae).